The following is a 190-amino-acid chain: UPF0301 protein Psyr_0485 (190 aa).

This sequence belongs to the UPF0301 (AlgH) family.

The polypeptide is UPF0301 protein Psyr_0485 (Pseudomonas syringae pv. syringae (strain B728a)).